The chain runs to 321 residues: tRNA-dihydrouridine synthase B (321 aa).

FMN-binding positions include 16-18 (PMA) and glutamine 70. Residue cysteine 100 is the Proton donor of the active site. Residues lysine 139, 200 to 202 (NGD), and 224 to 225 (GR) contribute to the FMN site.

This sequence belongs to the Dus family. DusB subfamily. FMN is required as a cofactor.

The enzyme catalyses a 5,6-dihydrouridine in tRNA + NAD(+) = a uridine in tRNA + NADH + H(+). It catalyses the reaction a 5,6-dihydrouridine in tRNA + NADP(+) = a uridine in tRNA + NADPH + H(+). Its function is as follows. Catalyzes the synthesis of 5,6-dihydrouridine (D), a modified base found in the D-loop of most tRNAs, via the reduction of the C5-C6 double bond in target uridines. The polypeptide is tRNA-dihydrouridine synthase B (Klebsiella pneumoniae).